Consider the following 316-residue polypeptide: uncharacterized protein (316 aa).

It belongs to the asfivirus F317L family.

Its subcellular location is the virion. This is an uncharacterized protein from Ornithodoros (relapsing fever ticks).